We begin with the raw amino-acid sequence, 178 residues long: Bifunctional protein PyrR (178 aa).

Residues 99–111 (IILVDDVLFTGRT) carry the PRPP-binding motif.

It belongs to the purine/pyrimidine phosphoribosyltransferase family. PyrR subfamily. Homodimer and homohexamer; in equilibrium.

It carries out the reaction UMP + diphosphate = 5-phospho-alpha-D-ribose 1-diphosphate + uracil. In terms of biological role, regulates transcriptional attenuation of the pyrimidine nucleotide (pyr) operon by binding in a uridine-dependent manner to specific sites on pyr mRNA. This disrupts an antiterminator hairpin in the RNA and favors formation of a downstream transcription terminator, leading to a reduced expression of downstream genes. Functionally, also displays a weak uracil phosphoribosyltransferase activity which is not physiologically significant. The protein is Bifunctional protein PyrR of Clostridium novyi (strain NT).